Consider the following 80-residue polypeptide: Exodeoxyribonuclease 7 small subunit (80 aa).

A disordered region spans residues Leu-60–Glu-80. Basic and acidic residues predominate over residues Ile-61 to Leu-70. Positions Asp-71–Glu-80 are enriched in polar residues.

Belongs to the XseB family. In terms of assembly, heterooligomer composed of large and small subunits.

The protein resides in the cytoplasm. The enzyme catalyses Exonucleolytic cleavage in either 5'- to 3'- or 3'- to 5'-direction to yield nucleoside 5'-phosphates.. Bidirectionally degrades single-stranded DNA into large acid-insoluble oligonucleotides, which are then degraded further into small acid-soluble oligonucleotides. The polypeptide is Exodeoxyribonuclease 7 small subunit (Lactobacillus acidophilus (strain ATCC 700396 / NCK56 / N2 / NCFM)).